The following is a 125-amino-acid chain: Thioredoxin H-type (125 aa).

Positions 2-112 constitute a Thioredoxin domain; sequence AEGNVFACHS…LERKVAALAA (111 aa). Catalysis depends on nucleophile residues C38 and C41. A disulfide bond links C38 and C41.

It belongs to the thioredoxin family. Plant H-type subfamily.

Its subcellular location is the cytoplasm. Its function is as follows. Participates in various redox reactions through the reversible oxidation of the active center dithiol to a disulfide. The H form is known to activate a number of cytosolic enzymes. In Picea mariana (Black spruce), this protein is Thioredoxin H-type (SB09).